A 207-amino-acid polypeptide reads, in one-letter code: 2,3-bisphosphoglycerate-dependent phosphoglycerate mutase (207 aa).

Residues 10 to 17, 23 to 24, arginine 62, 89 to 92, lysine 100, 116 to 117, and 160 to 161 each bind substrate; these read RHGQSEWN, TG, ERDY, RR, and GN. The Tele-phosphohistidine intermediate role is filled by histidine 11. The active-site Proton donor/acceptor is the glutamate 89.

The protein belongs to the phosphoglycerate mutase family. BPG-dependent PGAM subfamily. As to quaternary structure, homodimer.

It carries out the reaction (2R)-2-phosphoglycerate = (2R)-3-phosphoglycerate. It functions in the pathway carbohydrate degradation; glycolysis; pyruvate from D-glyceraldehyde 3-phosphate: step 3/5. Its function is as follows. Catalyzes the interconversion of 2-phosphoglycerate and 3-phosphoglycerate. The polypeptide is 2,3-bisphosphoglycerate-dependent phosphoglycerate mutase (Rhodopseudomonas palustris (strain BisB18)).